A 197-amino-acid chain; its full sequence is Putative rho GDP-dissociation inhibitor 1 (197 aa).

Belongs to the Rho GDI family. As to quaternary structure, interacts with rac1A, rac1B, rac1C, racB, raCC and RacE.

It is found in the cytoplasm. Its function is as follows. Regulates the GDP/GTP exchange reaction of the Rho proteins by inhibiting the dissociation of GDP from them, and the subsequent binding of GTP to them. Regulates the Rac-dependent signaling pathways controlling cytokinesis, actin reorganization and the contractile vacuole. Required for efficient accumulation of cap at the cell cortex. This Dictyostelium discoideum (Social amoeba) protein is Putative rho GDP-dissociation inhibitor 1 (rdiA).